The primary structure comprises 526 residues: NAD(P)H-quinone oxidoreductase chain 4 (526 aa).

The next 13 helical transmembrane spans lie at 5-25 (FPWL…VPLI), 32-52 (WYSF…FFTS), 87-107 (LILL…PVTL), 111-131 (MFHF…AVQD), 133-153 (VLFF…LAIW), 165-185 (FILY…AMYF), 211-231 (FLGL…HTWL), 239-259 (TAPV…YALI), 273-293 (FAPL…LTSF), 302-320 (IAYS…VGSL), 331-351 (QMIS…ATYD), 371-393 (IFAM…GFVA), and 414-434 (LVVL…LSML).

Belongs to the complex I subunit 4 family.

The protein resides in the cell inner membrane. It catalyses the reaction a plastoquinone + NADH + (n+1) H(+)(in) = a plastoquinol + NAD(+) + n H(+)(out). The enzyme catalyses a plastoquinone + NADPH + (n+1) H(+)(in) = a plastoquinol + NADP(+) + n H(+)(out). In terms of biological role, NDH-1 shuttles electrons from NAD(P)H, via FMN and iron-sulfur (Fe-S) centers, to quinones in the respiratory chain. The immediate electron acceptor for the enzyme in this species is believed to be plastoquinone. Couples the redox reaction to proton translocation (for every two electrons transferred, four hydrogen ions are translocated across the cytoplasmic membrane), and thus conserves the redox energy in a proton gradient. The chain is NAD(P)H-quinone oxidoreductase chain 4 from Gloeobacter violaceus (strain ATCC 29082 / PCC 7421).